A 633-amino-acid polypeptide reads, in one-letter code: FAD-binding monooxygenase andJ (633 aa).

FAD contacts are provided by residues 117–120 (TWYW), 129–130 (DT), and Tyr-135. NADP(+) is bound at residue 127–129 (MCD). NADP(+) contacts are provided by residues 269–275 (TGASAVQ) and 292–293 (RT).

Belongs to the FAD-binding monooxygenase family. It depends on FAD as a cofactor.

Its pathway is secondary metabolite biosynthesis; terpenoid biosynthesis. In terms of biological role, FAD-binding monooxygenase; part of the gene cluster that mediates the biosynthesis of anditomin, a fungal meroterpenoid. The first step of the pathway is the synthesis of 3,5-dimethylorsellinic acid (DMOA) by the polyketide synthase andM. DMOA is then converted to the phthalide compound 5,7-dihydroxy-4,6-dimethylphthalide (DHDMP) by the cytochrome P450 monooxygenase andK, which is further prenylated by the prenyltransferase andD to yield farnesyl-DHDMP. Further epoxidation by the FAD-dependent monooxygenase andE leads to epoxyfarnesyl-DHDMP. The next step involves the terpene cyclase andB that converts epoxyfarnesyl-DHDMP into preandiloid A through opening of the epoxide ring followed by the cyclization of the farnesyl moiety. Preandiloid A is in turn oxidized at the C-3 hydroxyl group to yield preandiloid B by the dehydrogenase andC. The dioxygenase andA is solely responsible for the dehydrogenation of preandiloid B leading to the enone preandiloid C, as well as for the intriguing structural rearrangement to generate the bicyclo[2.2.2]octane core, transforming preandiloid C into andiconin. FAD-binding monooxygenase andJ then produces andilesin D which is reduced by dehydrogenase andI to yield andilesin A. Action of acetyltransferase andG followed by a spontaneous acetate elimination leads then to andilesin B, which is in turn substrate of the short chain dehydrogenase andH to yield andilesin C. Finally, the dioxygenase andF catalyzes the transformation of andilesin C to anditomin. This chain is FAD-binding monooxygenase andJ, found in Emericella variicolor (Aspergillus stellatus).